The chain runs to 446 residues: Maltoporin (446 aa).

Residues 1 to 25 (MMITLRKLPLAVAVAAGVMSAQAMA) form the signal peptide.

This sequence belongs to the porin LamB (TC 1.B.3) family. In terms of assembly, homotrimer formed of three 18-stranded antiparallel beta-barrels, containing three independent channels.

Its subcellular location is the cell outer membrane. The catalysed reaction is beta-maltose(in) = beta-maltose(out). Functionally, involved in the transport of maltose and maltodextrins. The polypeptide is Maltoporin (Escherichia coli (strain K12 / MC4100 / BW2952)).